The chain runs to 116 residues: Beta-2-microglobulin (116 aa).

The signal sequence occupies residues 1-19; that stretch reads MRALITFALLCLLYITVQG. Residues 24–111 enclose the Ig-like C1-type domain; the sequence is PKVHVYSHFP…RHMKETKKFS (88 aa). An intrachain disulfide couples Cys-44 to Cys-99.

Belongs to the beta-2-microglobulin family. As to quaternary structure, heterodimer of an alpha chain and a beta chain. Beta-2-microglobulin is the beta-chain of major histocompatibility complex class I molecules.

The protein localises to the secreted. In terms of biological role, component of the class I major histocompatibility complex (MHC). Involved in the presentation of peptide antigens to the immune system. The protein is Beta-2-microglobulin (b2m) of Danio rerio (Zebrafish).